The chain runs to 544 residues: CTP synthase (544 aa).

The segment at 1–267 is amidoligase domain; that stretch reads MAKFVFITGG…AQRVLQILNL (267 aa). A CTP-binding site is contributed by serine 13. UTP is bound at residue serine 13. 14–19 contributes to the ATP binding site; that stretch reads SIGKGI. Tyrosine 54 is an L-glutamine binding site. Residue aspartate 71 coordinates ATP. Positions 71 and 141 each coordinate Mg(2+). Residues 148–150, 188–193, and lysine 224 each bind CTP; these read DIE and KTKPTQ. Residues 188–193 and lysine 224 each bind UTP; that span reads KTKPTQ. The Glutamine amidotransferase type-1 domain occupies 292–534; that stretch reads EIAIVGKYVR…IEAALRSRSR (243 aa). Glycine 354 serves as a coordination point for L-glutamine. The Nucleophile; for glutamine hydrolysis role is filled by cysteine 381. L-glutamine-binding positions include 382 to 385, glutamate 405, and arginine 462; that span reads LGMQ. Residues histidine 507 and glutamate 509 contribute to the active site.

This sequence belongs to the CTP synthase family. As to quaternary structure, homotetramer.

It catalyses the reaction UTP + L-glutamine + ATP + H2O = CTP + L-glutamate + ADP + phosphate + 2 H(+). The enzyme catalyses L-glutamine + H2O = L-glutamate + NH4(+). The catalysed reaction is UTP + NH4(+) + ATP = CTP + ADP + phosphate + 2 H(+). The protein operates within pyrimidine metabolism; CTP biosynthesis via de novo pathway; CTP from UDP: step 2/2. With respect to regulation, allosterically activated by GTP, when glutamine is the substrate; GTP has no effect on the reaction when ammonia is the substrate. The allosteric effector GTP functions by stabilizing the protein conformation that binds the tetrahedral intermediate(s) formed during glutamine hydrolysis. Inhibited by the product CTP, via allosteric rather than competitive inhibition. Catalyzes the ATP-dependent amination of UTP to CTP with either L-glutamine or ammonia as the source of nitrogen. Regulates intracellular CTP levels through interactions with the four ribonucleotide triphosphates. In Synechococcus sp. (strain JA-3-3Ab) (Cyanobacteria bacterium Yellowstone A-Prime), this protein is CTP synthase.